A 293-amino-acid polypeptide reads, in one-letter code: MTVAITQTGPALQEFIKRHQRLFVLSGAGCSTDSGIPDYRDLHGGWKRPQPVTFQAFMGELSTRQRYWARSLVGWPRFGLARPNATHHALAALEARGQLELLLTQNVDRLHQAAGSQAVIDLHGRLDVVRCMGCEQRMPRTEFQLLLERDNPGWADLEAAQAPDGDADLDSVAFDNFVVPACPACGCVLKPDVVFFGENVPRERVERAFAHLQAADAVLVVGSSLMVYSGFRFVQAAARAGLPIAALNFGRTRADDLLSLKVEQSCAQALAFLQQPPDPLHTATARYHSARSA.

Residues 1–284 (MTVAITQTGP…QPPDPLHTAT (284 aa)) enclose the Deacetylase sirtuin-type domain. Residues 27–47 (GAGC…GGWK) and 105–108 (QNVD) each bind NAD(+). The active-site Proton acceptor is the H123. 4 residues coordinate Zn(2+): C131, C134, C182, and C185. NAD(+) is bound by residues 222–224 (GSS), 248–250 (NFG), and C266.

Belongs to the sirtuin family. Class II subfamily. It depends on Zn(2+) as a cofactor.

The protein resides in the cytoplasm. The catalysed reaction is N(6)-acetyl-L-lysyl-[protein] + NAD(+) + H2O = 2''-O-acetyl-ADP-D-ribose + nicotinamide + L-lysyl-[protein]. NAD-dependent protein deacetylase which modulates the activities of several enzymes which are inactive in their acetylated form. The sequence is that of NAD-dependent protein deacetylase from Xanthomonas campestris pv. campestris (strain B100).